Here is a 213-residue protein sequence, read N- to C-terminus: Thiamine-phosphate synthase (213 aa).

Residues 38 to 42 (QLRIK) and Asn-70 contribute to the 4-amino-2-methyl-5-(diphosphooxymethyl)pyrimidine site. Mg(2+)-binding residues include Asp-71 and Asp-90. A 4-amino-2-methyl-5-(diphosphooxymethyl)pyrimidine-binding site is contributed by Ser-109. 135–137 (TQT) serves as a coordination point for 2-[(2R,5Z)-2-carboxy-4-methylthiazol-5(2H)-ylidene]ethyl phosphate. A 4-amino-2-methyl-5-(diphosphooxymethyl)pyrimidine-binding site is contributed by Lys-138. Residues Gly-168 and 188-189 (VS) each bind 2-[(2R,5Z)-2-carboxy-4-methylthiazol-5(2H)-ylidene]ethyl phosphate.

Belongs to the thiamine-phosphate synthase family. Requires Mg(2+) as cofactor.

The enzyme catalyses 2-[(2R,5Z)-2-carboxy-4-methylthiazol-5(2H)-ylidene]ethyl phosphate + 4-amino-2-methyl-5-(diphosphooxymethyl)pyrimidine + 2 H(+) = thiamine phosphate + CO2 + diphosphate. The catalysed reaction is 2-(2-carboxy-4-methylthiazol-5-yl)ethyl phosphate + 4-amino-2-methyl-5-(diphosphooxymethyl)pyrimidine + 2 H(+) = thiamine phosphate + CO2 + diphosphate. It carries out the reaction 4-methyl-5-(2-phosphooxyethyl)-thiazole + 4-amino-2-methyl-5-(diphosphooxymethyl)pyrimidine + H(+) = thiamine phosphate + diphosphate. The protein operates within cofactor biosynthesis; thiamine diphosphate biosynthesis; thiamine phosphate from 4-amino-2-methyl-5-diphosphomethylpyrimidine and 4-methyl-5-(2-phosphoethyl)-thiazole: step 1/1. Its function is as follows. Condenses 4-methyl-5-(beta-hydroxyethyl)thiazole monophosphate (THZ-P) and 2-methyl-4-amino-5-hydroxymethyl pyrimidine pyrophosphate (HMP-PP) to form thiamine monophosphate (TMP). This is Thiamine-phosphate synthase from Pectobacterium atrosepticum (strain SCRI 1043 / ATCC BAA-672) (Erwinia carotovora subsp. atroseptica).